Here is a 179-residue protein sequence, read N- to C-terminus: tRNA-splicing endonuclease (179 aa).

Catalysis depends on residues Tyr-115, His-123, and Lys-154.

This sequence belongs to the tRNA-intron endonuclease family. Archaeal short subfamily. As to quaternary structure, homotetramer; although the tetramer contains four active sites, only two participate in the cleavage. Therefore, it should be considered as a dimer of dimers.

It carries out the reaction pretRNA = a 3'-half-tRNA molecule with a 5'-OH end + a 5'-half-tRNA molecule with a 2',3'-cyclic phosphate end + an intron with a 2',3'-cyclic phosphate and a 5'-hydroxyl terminus.. Functionally, endonuclease that removes tRNA introns. Cleaves pre-tRNA at the 5'- and 3'-splice sites to release the intron. The products are an intron and two tRNA half-molecules bearing 2',3' cyclic phosphate and 5'-OH termini. Recognizes a pseudosymmetric substrate in which 2 bulged loops of 3 bases are separated by a stem of 4 bp. This chain is tRNA-splicing endonuclease, found in Methanopyrus kandleri (strain AV19 / DSM 6324 / JCM 9639 / NBRC 100938).